We begin with the raw amino-acid sequence, 368 residues long: UDP-N-acetylglucosamine--N-acetylmuramyl-(pentapeptide) pyrophosphoryl-undecaprenol N-acetylglucosamine transferase (368 aa).

UDP-N-acetyl-alpha-D-glucosamine-binding positions include 13–15, Asn127, Arg168, Ser200, Ile254, and Gln299; that span reads TGG.

This sequence belongs to the glycosyltransferase 28 family. MurG subfamily.

Its subcellular location is the cell inner membrane. It catalyses the reaction di-trans,octa-cis-undecaprenyl diphospho-N-acetyl-alpha-D-muramoyl-L-alanyl-D-glutamyl-meso-2,6-diaminopimeloyl-D-alanyl-D-alanine + UDP-N-acetyl-alpha-D-glucosamine = di-trans,octa-cis-undecaprenyl diphospho-[N-acetyl-alpha-D-glucosaminyl-(1-&gt;4)]-N-acetyl-alpha-D-muramoyl-L-alanyl-D-glutamyl-meso-2,6-diaminopimeloyl-D-alanyl-D-alanine + UDP + H(+). It functions in the pathway cell wall biogenesis; peptidoglycan biosynthesis. Its function is as follows. Cell wall formation. Catalyzes the transfer of a GlcNAc subunit on undecaprenyl-pyrophosphoryl-MurNAc-pentapeptide (lipid intermediate I) to form undecaprenyl-pyrophosphoryl-MurNAc-(pentapeptide)GlcNAc (lipid intermediate II). The sequence is that of UDP-N-acetylglucosamine--N-acetylmuramyl-(pentapeptide) pyrophosphoryl-undecaprenol N-acetylglucosamine transferase from Parabacteroides distasonis (strain ATCC 8503 / DSM 20701 / CIP 104284 / JCM 5825 / NCTC 11152).